A 182-amino-acid polypeptide reads, in one-letter code: NADH-quinone oxidoreductase subunit B 2 (182 aa).

The [4Fe-4S] cluster site is built by C55, C56, C120, and C150.

It belongs to the complex I 20 kDa subunit family. NDH-1 is composed of 14 different subunits. Subunits NuoB, C, D, E, F, and G constitute the peripheral sector of the complex. [4Fe-4S] cluster is required as a cofactor.

The protein resides in the cell inner membrane. It catalyses the reaction a quinone + NADH + 5 H(+)(in) = a quinol + NAD(+) + 4 H(+)(out). Functionally, NDH-1 shuttles electrons from NADH, via FMN and iron-sulfur (Fe-S) centers, to quinones in the respiratory chain. The immediate electron acceptor for the enzyme in this species is believed to be ubiquinone. Couples the redox reaction to proton translocation (for every two electrons transferred, four hydrogen ions are translocated across the cytoplasmic membrane), and thus conserves the redox energy in a proton gradient. The polypeptide is NADH-quinone oxidoreductase subunit B 2 (Sorangium cellulosum (strain So ce56) (Polyangium cellulosum (strain So ce56))).